We begin with the raw amino-acid sequence, 581 residues long: Tetratricopeptide repeat and J domain-containing co-chaperone DNJ1 (581 aa).

An N-terminal signal peptide occupies residues 1–19; sequence MKATLLPSLLALSLTLCLA. 7 TPR repeats span residues 48-81, 82-115, 116-149, 221-254, 257-293, 378-411, and 412-445; these read ASQHLTQANVALQSGRYQDALSAFDLALQADPSS, WLTYYRRATAQLSLGRTSAALQDFQSLLKLNPKF, DKAYLQQAKVYLKEGDCDKAKQALKTYDSIRAEK, LETRLVRARCQTMKGRIEDAMADWTRAVHLTPSP, LRRLSVLSYFVVSEPGSQSRDAGLQHLKACLHSDPDN, LELHTMYCKAYTELNDMDKAMPYCELVLAKDPDN, and VEATLARAELALQREDYDQAVRDLTKAFDASGRT. Asn-293 carries an N-linked (GlcNAc...) asparagine glycan. In terms of domain architecture, J spans 467-528; the sequence is DYYKVLGVKR…ELRKKYDQGD (62 aa). The tract at residues 522–544 is disordered; sequence KKYDQGDDPNDPMGGQQGGYGNP.

As to quaternary structure, interacts with the ER chaperone BIP1.

It localises to the endoplasmic reticulum lumen. Its function is as follows. Endoplasmic reticulum (ER) protein that functions as a co-chaperone for BIP1 during ER stress. Might be specifically involved in the refolding of N-glycosylated proteins. This is Tetratricopeptide repeat and J domain-containing co-chaperone DNJ1 from Mycosarcoma maydis (Corn smut fungus).